The following is a 377-amino-acid chain: Adaptive-response sensory kinase SasA (377 aa).

Residues 154–373 (MLVHDLRSPL…SFHFTLPVYR (220 aa)) form the Histidine kinase domain. A Phosphohistidine; by autocatalysis modification is found at His-157.

In terms of assembly, homooligomerizes. Interacts with KaiC. Participates in the KaiABC clock complex, whose core is composed of a KaiC homohexamer, 6 KaiB and up to 6 KaiA dimers. SasA and KaiB(fs) compete to bind to KaiC.

The catalysed reaction is ATP + protein L-histidine = ADP + protein N-phospho-L-histidine.. Member of the two-component regulatory system SasA/RpaA involved in genome-wide circadian gene expression. One of several clock output pathways. Participates in the Kai clock protein complex, the main circadian regulator in cyanobacteria, via its interaction with KaiC. KaiC enhances the autophosphorylation activity of SasA, which then transfers its phosphate group to RpaA to activate it. In addition to its output function, recruits fold-shifted KaiB (KaiB(fs)) to KaiC to cooperatively form the KaiB(6):KaiC(6) complex (independent of SasA kinase activity). Required for robustness of the circadian rhythm of gene expression and is involved in clock output, also required for adaptation to light/dark cycles. This chain is Adaptive-response sensory kinase SasA, found in Synechococcus sp. (strain JA-2-3B'a(2-13)) (Cyanobacteria bacterium Yellowstone B-Prime).